The following is a 314-amino-acid chain: Thymidylate synthase (314 aa).

DUMP-binding positions include Arg21 and 176 to 177; that span reads RR. The Nucleophile role is filled by Cys196. DUMP-binding positions include 216–219, Asn227, and 257–259; these read RSAD and HLY. (6R)-5,10-methylene-5,6,7,8-tetrahydrofolate is bound at residue Asp219. Ser313 contacts (6R)-5,10-methylene-5,6,7,8-tetrahydrofolate.

It belongs to the thymidylate synthase family. Bacterial-type ThyA subfamily. In terms of assembly, homodimer.

It localises to the cytoplasm. The catalysed reaction is dUMP + (6R)-5,10-methylene-5,6,7,8-tetrahydrofolate = 7,8-dihydrofolate + dTMP. Its pathway is pyrimidine metabolism; dTTP biosynthesis. In terms of biological role, catalyzes the reductive methylation of 2'-deoxyuridine-5'-monophosphate (dUMP) to 2'-deoxythymidine-5'-monophosphate (dTMP) while utilizing 5,10-methylenetetrahydrofolate (mTHF) as the methyl donor and reductant in the reaction, yielding dihydrofolate (DHF) as a by-product. This enzymatic reaction provides an intracellular de novo source of dTMP, an essential precursor for DNA biosynthesis. The polypeptide is Thymidylate synthase (Listeria monocytogenes serotype 4b (strain F2365)).